A 181-amino-acid chain; its full sequence is Adenylate kinase (181 aa).

10–15 (GAGKGT) contacts ATP. The interval 30–59 (STGDLFRKNIGDGTPLGLEAKRYLDAGDLV) is NMP. Residues Thr31, Arg36, 57–59 (DLV), 85–88 (GYPR), and Gln92 each bind AMP. Residues 126–132 (GRGRADD) are LID. An ATP-binding site is contributed by Arg127. AMP-binding residues include Arg129 and Arg140. Gly166 contacts ATP.

Belongs to the adenylate kinase family. In terms of assembly, monomer.

The protein resides in the cytoplasm. The catalysed reaction is AMP + ATP = 2 ADP. The protein operates within purine metabolism; AMP biosynthesis via salvage pathway; AMP from ADP: step 1/1. Catalyzes the reversible transfer of the terminal phosphate group between ATP and AMP. Plays an important role in cellular energy homeostasis and in adenine nucleotide metabolism. The protein is Adenylate kinase of Mycolicibacterium smegmatis (strain ATCC 700084 / mc(2)155) (Mycobacterium smegmatis).